A 476-amino-acid chain; its full sequence is Bifunctional protein HldE (476 aa).

The interval 1 to 319 (MKVTLPAFEK…GALASHQGES (319 aa)) is ribokinase. 195-198 (NMSE) lines the ATP pocket. Asp-264 is an active-site residue. The segment at 345–476 (MTNGCFDILH…SIIQNIMARQ (132 aa)) is cytidylyltransferase.

The protein in the N-terminal section; belongs to the carbohydrate kinase PfkB family. This sequence in the C-terminal section; belongs to the cytidylyltransferase family. As to quaternary structure, homodimer.

It carries out the reaction D-glycero-beta-D-manno-heptose 7-phosphate + ATP = D-glycero-beta-D-manno-heptose 1,7-bisphosphate + ADP + H(+). The catalysed reaction is D-glycero-beta-D-manno-heptose 1-phosphate + ATP + H(+) = ADP-D-glycero-beta-D-manno-heptose + diphosphate. It participates in nucleotide-sugar biosynthesis; ADP-L-glycero-beta-D-manno-heptose biosynthesis; ADP-L-glycero-beta-D-manno-heptose from D-glycero-beta-D-manno-heptose 7-phosphate: step 1/4. It functions in the pathway nucleotide-sugar biosynthesis; ADP-L-glycero-beta-D-manno-heptose biosynthesis; ADP-L-glycero-beta-D-manno-heptose from D-glycero-beta-D-manno-heptose 7-phosphate: step 3/4. Its function is as follows. Catalyzes the phosphorylation of D-glycero-D-manno-heptose 7-phosphate at the C-1 position to selectively form D-glycero-beta-D-manno-heptose-1,7-bisphosphate. In terms of biological role, catalyzes the ADP transfer from ATP to D-glycero-beta-D-manno-heptose 1-phosphate, yielding ADP-D-glycero-beta-D-manno-heptose. The chain is Bifunctional protein HldE from Shewanella denitrificans (strain OS217 / ATCC BAA-1090 / DSM 15013).